Reading from the N-terminus, the 494-residue chain is Cytochrome P450 2C23 (494 aa).

A Phosphoserine modification is found at Ser131. N6-acetyllysine occurs at positions 253 and 379. Cys439 serves as a coordination point for heme.

Belongs to the cytochrome P450 family. Heme serves as cofactor. As to expression, expressed in kidney and liver. Expressed in cortical tubules of kidney (at protein level).

The protein resides in the endoplasmic reticulum membrane. It localises to the microsome membrane. The catalysed reaction is (5Z,8Z,11Z,14Z)-eicosatetraenoate + reduced [NADPH--hemoprotein reductase] + O2 = (8R,9S)-epoxy-(5Z,11Z,14Z)-eicosatrienoate + oxidized [NADPH--hemoprotein reductase] + H2O + H(+). It carries out the reaction (5Z,8Z,11Z,14Z)-eicosatetraenoate + reduced [NADPH--hemoprotein reductase] + O2 = (11R,12S)-epoxy-(5Z,8Z,14Z)-eicosatrienoate + oxidized [NADPH--hemoprotein reductase] + H2O + H(+). It catalyses the reaction (5Z,8Z,11Z,14Z)-eicosatetraenoate + reduced [NADPH--hemoprotein reductase] + O2 = (11S,12R)-epoxy-(5Z,8Z,14Z)-eicosatrienoate + oxidized [NADPH--hemoprotein reductase] + H2O + H(+). The enzyme catalyses (5Z,8Z,11Z,14Z)-eicosatetraenoate + reduced [NADPH--hemoprotein reductase] + O2 = (14R,15S)-epoxy-(5Z,8Z,11Z)-eicosatrienoate + oxidized [NADPH--hemoprotein reductase] + H2O + H(+). The catalysed reaction is (5Z,8Z,11Z,14Z)-eicosatetraenoate + reduced [NADPH--hemoprotein reductase] + O2 = (14S,15R)-epoxy-(5Z,8Z,11Z)-eicosatrienoate + oxidized [NADPH--hemoprotein reductase] + H2O + H(+). It carries out the reaction (5Z,8Z,11Z,14Z,17Z)-eicosapentaenoate + reduced [NADPH--hemoprotein reductase] + O2 = 8,9-epoxy-(5Z,11Z,14Z,17Z)-eicosatetraenoate + oxidized [NADPH--hemoprotein reductase] + H2O + H(+). It catalyses the reaction (5Z,8Z,11Z,14Z,17Z)-eicosapentaenoate + reduced [NADPH--hemoprotein reductase] + O2 = 11,12-epoxy-(5Z,8Z,14Z,17Z)-eicosatetraenoate + oxidized [NADPH--hemoprotein reductase] + H2O + H(+). The enzyme catalyses (5Z,8Z,11Z,14Z,17Z)-eicosapentaenoate + reduced [NADPH--hemoprotein reductase] + O2 = 14,15-epoxy-(5Z,8Z,11Z,17Z)-eicosatetraenoate + oxidized [NADPH--hemoprotein reductase] + H2O + H(+). The catalysed reaction is (5Z,8Z,11Z,14Z,17Z)-eicosapentaenoate + reduced [NADPH--hemoprotein reductase] + O2 = (17R,18S)-epoxy-(5Z,8Z,11Z,14Z)-eicosatetraenoate + oxidized [NADPH--hemoprotein reductase] + H2O + H(+). It carries out the reaction (5Z,8Z,11Z,14Z,17Z)-eicosapentaenoate + reduced [NADPH--hemoprotein reductase] + O2 = (17S,18R)-epoxy-(5Z,8Z,11Z,14Z)-eicosatetraenoate + oxidized [NADPH--hemoprotein reductase] + H2O + H(+). It catalyses the reaction 20-hydroxy-(5Z,8Z,11Z,14Z)-eicosatetraenoate + reduced [NADPH--hemoprotein reductase] + O2 = 20-hydroxy-8,9-epoxy-(5Z,11Z,14Z)-eicosatrienoate + oxidized [NADPH--hemoprotein reductase] + H2O + H(+). The protein operates within lipid metabolism; arachidonate metabolism. A cytochrome P450 monooxygenase involved in polyunsaturated fatty acids (PUFAs) metabolism and signaling. Catalyzes preferentially the epoxidation of double bonds of PUFAs. Converts arachidonic acid (ARA, C20:4(n-6)) primarily to stereospecific products 8R,9S-, 11R,12S-, and 14S,15R-EET. Plays a major role in the formation of EETs and hydroxy-EETs (HEETs) in kidney. Via EETs may inhibit the epithelial sodium channels (ENaCs) in nephron segments, preventing excessive sodium absorption during high dietary salt intake. Participates in the formation of anti-inflammatory hydroxyepoxyeicosatrienoic acids (HEETs) by converting 20-hydroxyeicosatetraenoic acid (20-HETE) to 20,8,9-HEET, an activator of PPARA. Metabolizes eicosapentaenoic acid (EPA, C20:5(n-3)) to epoxyeicosatetraenoic acid (EETeTr) regioisomers, 8,9-, 11,12-, 14,15-, and 17,18-EETeTr, preferentially producing 17R,18S enantiomer. Mechanistically, uses molecular oxygen inserting one oxygen atom into a substrate, and reducing the second into a water molecule, with two electrons provided by NADPH via cytochrome P450 reductase (NADPH--hemoprotein reductase). The protein is Cytochrome P450 2C23 of Rattus norvegicus (Rat).